We begin with the raw amino-acid sequence, 812 residues long: Collagen-like protein 5 (812 aa).

N-linked (GlcNAc...) asparagine; by host glycosylation is found at Asn-13 and Asn-83. Collagen-like domains follow at residues 69–128, 143–502, and 506–565; these read GASG…KGDD, GEKG…KGDN, and GETG…KGEA. The tract at residues 71–568 is disordered; the sequence is SGAQGVKGDP…PGIKGEAGTN (498 aa). Composition is skewed to basic and acidic residues over residues 88 to 112, 121 to 435, 444 to 523, and 531 to 561; these read TKGEKGDKGDKGSKGDNGEKGEKGD, SKGD…ETGS, SKGD…KGIK, and VKGDKGSKGDKGDLGDTGIKGDKGEKGDPGI. The N-linked (GlcNAc...) asparagine; by host glycan is linked to Asn-502. 3 N-linked (GlcNAc...) asparagine; by host glycosylation sites follow: Asn-637, Asn-658, and Asn-667. The disordered stretch occupies residues 730-802; the sequence is GQARTNGAST…VSASGGRGGD (73 aa). Residues 752–765 are compositionally biased toward gly residues; it reads FGGGGGGASGFAKG.

In terms of processing, may be hydroxylated on lysine by the viral-encoded procollagen-lysine,2-oxoglutarate 5-dioxygenase.

It localises to the virion. Functionally, may participate in the formation of a layer of cross-linked glycosylated fibrils at the viral surface thus giving it a hairy-like appearance. The chain is Collagen-like protein 5 from Acanthamoeba polyphaga (Amoeba).